A 384-amino-acid chain; its full sequence is S-adenosylmethionine synthase (384 aa).

Position 15 (His-15) interacts with ATP. Asp-17 contributes to the Mg(2+) binding site. Glu-43 contacts K(+). L-methionine contacts are provided by Glu-56 and Gln-99. Residues 99–109 (QSPDINQGVDR) are flexible loop. ATP-binding positions include 164-166 (DAK), 230-231 (RF), Asp-239, 245-246 (RK), Ala-262, and Lys-266. An L-methionine-binding site is contributed by Asp-239. Residue Lys-270 participates in L-methionine binding.

The protein belongs to the AdoMet synthase family. In terms of assembly, homotetramer; dimer of dimers. The cofactor is Mg(2+). K(+) is required as a cofactor.

It localises to the cytoplasm. It catalyses the reaction L-methionine + ATP + H2O = S-adenosyl-L-methionine + phosphate + diphosphate. It functions in the pathway amino-acid biosynthesis; S-adenosyl-L-methionine biosynthesis; S-adenosyl-L-methionine from L-methionine: step 1/1. In terms of biological role, catalyzes the formation of S-adenosylmethionine (AdoMet) from methionine and ATP. The overall synthetic reaction is composed of two sequential steps, AdoMet formation and the subsequent tripolyphosphate hydrolysis which occurs prior to release of AdoMet from the enzyme. The protein is S-adenosylmethionine synthase of Citrobacter koseri (strain ATCC BAA-895 / CDC 4225-83 / SGSC4696).